Consider the following 399-residue polypeptide: Acetate kinase (399 aa).

Asn8 contacts Mg(2+). Lys15 provides a ligand contact to ATP. Arg89 provides a ligand contact to substrate. Catalysis depends on Asp146, which acts as the Proton donor/acceptor. Residues 206-210, 283-285, and 331-335 each bind ATP; these read HVGNG, DMR, and GMGEN. Glu383 is a Mg(2+) binding site.

This sequence belongs to the acetokinase family. Homodimer. Mg(2+) serves as cofactor. Requires Mn(2+) as cofactor.

The protein localises to the cytoplasm. The catalysed reaction is acetate + ATP = acetyl phosphate + ADP. It functions in the pathway metabolic intermediate biosynthesis; acetyl-CoA biosynthesis; acetyl-CoA from acetate: step 1/2. Catalyzes the formation of acetyl phosphate from acetate and ATP. Can also catalyze the reverse reaction. The chain is Acetate kinase from Streptococcus equi subsp. zooepidemicus (strain H70).